Reading from the N-terminus, the 467-residue chain is MAGQTLFQKLWDAHVVHVEPDGTTLLYIDRHLVHEVTSPQAFEGLKLAQRLPRRPDAAIAVPDHNVPTTDRSQGIADPVSRLQVETLDANCAEFGITEFRMDDVRQGIVHVIGPEEGLTLPGMTVVCGDSHTSTHGAFGALAFGIGTSEVEHVLATQCLWQKPSKTMLVKVEGELGKGVTAKDIALAVIGRIGTAGGTGYAIEFGGAAIRALSMEGRMTLCNMAIEAGARAGMVAVDQTTIDYVEGRPYAPTGEAWDTAVAWWKTLHSDADAVFDRVVELDAAAIEPQVTWGTSPEMVTTVGASVPDPSAAPSEVKRQDWVRALEYMGLAAGTPVSAIALDKVFIGSCTNSRIEDLREAAAVAKGRRVAPNVKLAMVVPGSGLVKQQAEAEGLDRIFIDAGFEWREPGCSMCLAMNADRLEPGERCASTSNRNFEGRQGQGGRTHLVSPAMAAAAACAGHFVDVRNF.

[4Fe-4S] cluster-binding residues include Cys-348, Cys-409, and Cys-412.

The protein belongs to the aconitase/IPM isomerase family. LeuC type 1 subfamily. As to quaternary structure, heterodimer of LeuC and LeuD. [4Fe-4S] cluster is required as a cofactor.

The enzyme catalyses (2R,3S)-3-isopropylmalate = (2S)-2-isopropylmalate. It functions in the pathway amino-acid biosynthesis; L-leucine biosynthesis; L-leucine from 3-methyl-2-oxobutanoate: step 2/4. Functionally, catalyzes the isomerization between 2-isopropylmalate and 3-isopropylmalate, via the formation of 2-isopropylmaleate. This is 3-isopropylmalate dehydratase large subunit from Thiobacillus denitrificans (strain ATCC 25259 / T1).